The sequence spans 180 residues: Large ribosomal subunit protein uL5 (180 aa).

The protein belongs to the universal ribosomal protein uL5 family. Part of the 50S ribosomal subunit; part of the 5S rRNA/L5/L18/L25 subcomplex. Contacts the 5S rRNA and the P site tRNA. Forms a bridge to the 30S subunit in the 70S ribosome.

In terms of biological role, this is one of the proteins that bind and probably mediate the attachment of the 5S RNA into the large ribosomal subunit, where it forms part of the central protuberance. In the 70S ribosome it contacts protein S13 of the 30S subunit (bridge B1b), connecting the 2 subunits; this bridge is implicated in subunit movement. Contacts the P site tRNA; the 5S rRNA and some of its associated proteins might help stabilize positioning of ribosome-bound tRNAs. The polypeptide is Large ribosomal subunit protein uL5 (Streptococcus uberis (strain ATCC BAA-854 / 0140J)).